The following is a 129-amino-acid chain: NADH-quinone oxidoreductase subunit A (129 aa).

3 helical membrane passes run 6-26 (FWPF…IVGF), 63-83 (LVAV…AWAV), and 89-109 (GWIG…ALIY).

Belongs to the complex I subunit 3 family. As to quaternary structure, NDH-1 is composed of 14 different subunits. Subunits NuoA, H, J, K, L, M, N constitute the membrane sector of the complex.

Its subcellular location is the cell inner membrane. It carries out the reaction a quinone + NADH + 5 H(+)(in) = a quinol + NAD(+) + 4 H(+)(out). Its function is as follows. NDH-1 shuttles electrons from NADH, via FMN and iron-sulfur (Fe-S) centers, to quinones in the respiratory chain. The immediate electron acceptor for the enzyme in this species is believed to be ubiquinone. Couples the redox reaction to proton translocation (for every two electrons transferred, four hydrogen ions are translocated across the cytoplasmic membrane), and thus conserves the redox energy in a proton gradient. This Nitrosococcus oceani (strain ATCC 19707 / BCRC 17464 / JCM 30415 / NCIMB 11848 / C-107) protein is NADH-quinone oxidoreductase subunit A.